The sequence spans 154 residues: 6,7-dimethyl-8-ribityllumazine synthase (154 aa).

5-amino-6-(D-ribitylamino)uracil contacts are provided by residues Phe21, 55-57 (AFE), and 79-81 (CVI). 84-85 (AT) contacts (2S)-2-hydroxy-3-oxobutyl phosphate. His87 acts as the Proton donor in catalysis. Phe112 serves as a coordination point for 5-amino-6-(D-ribitylamino)uracil. Arg126 contacts (2S)-2-hydroxy-3-oxobutyl phosphate.

This sequence belongs to the DMRL synthase family. Forms an icosahedral capsid composed of 60 subunits, arranged as a dodecamer of pentamers.

It catalyses the reaction (2S)-2-hydroxy-3-oxobutyl phosphate + 5-amino-6-(D-ribitylamino)uracil = 6,7-dimethyl-8-(1-D-ribityl)lumazine + phosphate + 2 H2O + H(+). The protein operates within cofactor biosynthesis; riboflavin biosynthesis; riboflavin from 2-hydroxy-3-oxobutyl phosphate and 5-amino-6-(D-ribitylamino)uracil: step 1/2. In terms of biological role, catalyzes the formation of 6,7-dimethyl-8-ribityllumazine by condensation of 5-amino-6-(D-ribitylamino)uracil with 3,4-dihydroxy-2-butanone 4-phosphate. This is the penultimate step in the biosynthesis of riboflavin. The chain is 6,7-dimethyl-8-ribityllumazine synthase from Staphylococcus aureus (strain Newman).